The following is a 207-amino-acid chain: Putative acetyltransferase C18B11.09c (207 aa).

It belongs to the transferase hexapeptide repeat family.

This chain is Putative acetyltransferase C18B11.09c, found in Schizosaccharomyces pombe (strain 972 / ATCC 24843) (Fission yeast).